Consider the following 476-residue polypeptide: Bifunctional protein HldE (476 aa).

The interval 1–318 is ribokinase; sequence MAQYSAEFKQ…ENAIHARPET (318 aa). An ATP-binding site is contributed by 195–198; it reads NMSE. Aspartate 264 is an active-site residue. The segment at 344 to 476 is cytidylyltransferase; that stretch reads MTNGCFDILH…VIEKIKLLKD (133 aa).

The protein in the N-terminal section; belongs to the carbohydrate kinase PfkB family. In the C-terminal section; belongs to the cytidylyltransferase family. As to quaternary structure, homodimer.

The enzyme catalyses D-glycero-beta-D-manno-heptose 7-phosphate + ATP = D-glycero-beta-D-manno-heptose 1,7-bisphosphate + ADP + H(+). It carries out the reaction D-glycero-beta-D-manno-heptose 1-phosphate + ATP + H(+) = ADP-D-glycero-beta-D-manno-heptose + diphosphate. It participates in nucleotide-sugar biosynthesis; ADP-L-glycero-beta-D-manno-heptose biosynthesis; ADP-L-glycero-beta-D-manno-heptose from D-glycero-beta-D-manno-heptose 7-phosphate: step 1/4. It functions in the pathway nucleotide-sugar biosynthesis; ADP-L-glycero-beta-D-manno-heptose biosynthesis; ADP-L-glycero-beta-D-manno-heptose from D-glycero-beta-D-manno-heptose 7-phosphate: step 3/4. In terms of biological role, catalyzes the phosphorylation of D-glycero-D-manno-heptose 7-phosphate at the C-1 position to selectively form D-glycero-beta-D-manno-heptose-1,7-bisphosphate. Its function is as follows. Catalyzes the ADP transfer from ATP to D-glycero-beta-D-manno-heptose 1-phosphate, yielding ADP-D-glycero-beta-D-manno-heptose. This is Bifunctional protein HldE from Haemophilus influenzae (strain 86-028NP).